A 160-amino-acid chain; its full sequence is Ribosomal RNA large subunit methyltransferase H (160 aa).

Residues L76, G108, and 127–132 (LGKMTW) each bind S-adenosyl-L-methionine.

The protein belongs to the RNA methyltransferase RlmH family. Homodimer.

The protein localises to the cytoplasm. The catalysed reaction is pseudouridine(1915) in 23S rRNA + S-adenosyl-L-methionine = N(3)-methylpseudouridine(1915) in 23S rRNA + S-adenosyl-L-homocysteine + H(+). Specifically methylates the pseudouridine at position 1915 (m3Psi1915) in 23S rRNA. This is Ribosomal RNA large subunit methyltransferase H from Rhizobium leguminosarum bv. trifolii (strain WSM2304).